Here is a 316-residue protein sequence, read N- to C-terminus: Ribosomal RNA small subunit methyltransferase H (316 aa).

S-adenosyl-L-methionine contacts are provided by residues 35-37 (GGH), aspartate 55, phenylalanine 79, aspartate 101, and glutamine 108. Residues 291-316 (AIKPSKDEVDENTRSRSSVLRIAEKL) form a disordered region. Positions 294–304 (PSKDEVDENTR) are enriched in basic and acidic residues.

Belongs to the methyltransferase superfamily. RsmH family.

Its subcellular location is the cytoplasm. It carries out the reaction cytidine(1402) in 16S rRNA + S-adenosyl-L-methionine = N(4)-methylcytidine(1402) in 16S rRNA + S-adenosyl-L-homocysteine + H(+). In terms of biological role, specifically methylates the N4 position of cytidine in position 1402 (C1402) of 16S rRNA. This is Ribosomal RNA small subunit methyltransferase H from Vibrio atlanticus (strain LGP32) (Vibrio splendidus (strain Mel32)).